The primary structure comprises 128 residues: Small ribosomal subunit protein uS11 (128 aa).

Belongs to the universal ribosomal protein uS11 family. Part of the 30S ribosomal subunit. Interacts with proteins S7 and S18. Binds to IF-3.

Functionally, located on the platform of the 30S subunit, it bridges several disparate RNA helices of the 16S rRNA. Forms part of the Shine-Dalgarno cleft in the 70S ribosome. This chain is Small ribosomal subunit protein uS11, found in Wolbachia pipientis wMel.